Here is a 269-residue protein sequence, read N- to C-terminus: Putative esterase/lipase 1 (269 aa).

His-27 is an active-site residue. Catalysis depends on Ser-94, which acts as the Charge relay system.

The protein belongs to the lipase/esterase LIP3/BchO family.

This chain is Putative esterase/lipase 1, found in Mycoplasma pneumoniae (strain ATCC 29342 / M129 / Subtype 1) (Mycoplasmoides pneumoniae).